A 217-amino-acid polypeptide reads, in one-letter code: Ribonuclease HII (217 aa).

Positions 12–201 (DLVAGVDEVG…VRTAHEARAA (190 aa)) constitute an RNase H type-2 domain. A divalent metal cation is bound by residues aspartate 18, glutamate 19, and aspartate 110.

Belongs to the RNase HII family. Mn(2+) is required as a cofactor. Requires Mg(2+) as cofactor.

It localises to the cytoplasm. The catalysed reaction is Endonucleolytic cleavage to 5'-phosphomonoester.. Functionally, endonuclease that specifically degrades the RNA of RNA-DNA hybrids. The polypeptide is Ribonuclease HII (Pseudomonas syringae pv. tomato (strain ATCC BAA-871 / DC3000)).